Here is a 167-residue protein sequence, read N- to C-terminus: U-scoloptoxin(08)-Er5a (167 aa).

A signal peptide spans methionine 1–glycine 22. The propeptide occupies glutamate 23–arginine 94. RLWRNWE repeat units lie at residues arginine 34–glutamate 40, arginine 61–glutamate 67, and arginine 86–glutamate 92. Pyrrolidone carboxylic acid is present on glutamine 95. The RLWRNWE 4; approximate repeat unit spans residues glutamate 107–glutamate 113. A propeptide spanning residues tryptophan 112–arginine 118 is cleaved from the precursor. A Pyrrolidone carboxylic acid modification is found at glutamine 119. The RLWRNWE 5 repeat unit spans residues arginine 134–glutamate 140. Residues tryptophan 139–glutamate 167 constitute a propeptide that is removed on maturation. The interval arginine 147–glutamate 167 is disordered.

It belongs to the scoloptoxin-08 family. In terms of tissue distribution, expressed by the venom gland.

Its subcellular location is the secreted. This chain is U-scoloptoxin(08)-Er5a, found in Ethmostigmus rubripes (Giant centipede).